Consider the following 293-residue polypeptide: Shikimate dehydrogenase (NADP(+)) (293 aa).

Residues 26 to 28 (SKS) and threonine 73 each bind shikimate. Lysine 77 (proton acceptor) is an active-site residue. Aspartate 89 provides a ligand contact to NADP(+). Asparagine 98 and aspartate 113 together coordinate shikimate. NADP(+) is bound by residues 137 to 141 (GAGGA), 161 to 166 (NRTKQR), and isoleucine 231. Residue tyrosine 233 coordinates shikimate. Residue glycine 254 participates in NADP(+) binding.

It belongs to the shikimate dehydrogenase family. As to quaternary structure, homodimer.

The catalysed reaction is shikimate + NADP(+) = 3-dehydroshikimate + NADPH + H(+). Its pathway is metabolic intermediate biosynthesis; chorismate biosynthesis; chorismate from D-erythrose 4-phosphate and phosphoenolpyruvate: step 4/7. Involved in the biosynthesis of the chorismate, which leads to the biosynthesis of aromatic amino acids. Catalyzes the reversible NADPH linked reduction of 3-dehydroshikimate (DHSA) to yield shikimate (SA). The polypeptide is Shikimate dehydrogenase (NADP(+)) (Bartonella henselae (strain ATCC 49882 / DSM 28221 / CCUG 30454 / Houston 1) (Rochalimaea henselae)).